Consider the following 214-residue polypeptide: 3-isopropylmalate dehydratase small subunit (214 aa).

The protein belongs to the LeuD family. LeuD type 1 subfamily. Heterodimer of LeuC and LeuD.

It catalyses the reaction (2R,3S)-3-isopropylmalate = (2S)-2-isopropylmalate. The protein operates within amino-acid biosynthesis; L-leucine biosynthesis; L-leucine from 3-methyl-2-oxobutanoate: step 2/4. In terms of biological role, catalyzes the isomerization between 2-isopropylmalate and 3-isopropylmalate, via the formation of 2-isopropylmaleate. The chain is 3-isopropylmalate dehydratase small subunit from Alcanivorax borkumensis (strain ATCC 700651 / DSM 11573 / NCIMB 13689 / SK2).